The primary structure comprises 248 residues: Proteasome subunit alpha type-1 (248 aa).

It belongs to the peptidase T1A family. The 26S proteasome consists of a 20S proteasome core and two 19S regulatory subunits. The 20S proteasome core is composed of 28 subunits that are arranged in four stacked rings, resulting in a barrel-shaped structure. The two end rings are each formed by seven alpha subunits, and the two central rings are each formed by seven beta subunits. The catalytic chamber with the active sites is on the inside of the barrel.

Its subcellular location is the cytoplasm. The protein resides in the nucleus. The proteasome is a multicatalytic proteinase complex which is characterized by its ability to cleave peptides with Arg, Phe, Tyr, Leu, and Glu adjacent to the leaving group at neutral or slightly basic pH. The proteasome has an ATP-dependent proteolytic activity. The protein is Proteasome subunit alpha type-1 (psmA1) of Dictyostelium discoideum (Social amoeba).